Here is an 86-residue protein sequence, read N- to C-terminus: Anti-adapter protein IraP (86 aa).

The stretch at 1-36 forms a coiled coil; the sequence is MKNLIAELLFKLAQKEEESKELCAQVEALEIIVTAM.

The protein belongs to the IraP family. In terms of assembly, interacts with RssB.

The protein resides in the cytoplasm. Its function is as follows. Inhibits RpoS proteolysis by regulating RssB activity, thereby increasing the stability of the sigma stress factor RpoS especially during phosphate starvation, but also in stationary phase and during nitrogen starvation. Its effect on RpoS stability is due to its interaction with RssB, which probably blocks the interaction of RssB with RpoS, and the consequent delivery of the RssB-RpoS complex to the ClpXP protein degradation pathway. The sequence is that of Anti-adapter protein IraP from Shigella flexneri serotype 5b (strain 8401).